The following is a 548-amino-acid chain: Chaperonin GroEL (548 aa).

Residues 29–32, Lys-50, 86–90, Gly-414, and Asp-493 contribute to the ATP site; these read THGP and DGTTT.

Belongs to the chaperonin (HSP60) family. In terms of assembly, forms a cylinder of 14 subunits composed of two heptameric rings stacked back-to-back. Interacts with the co-chaperonin GroES.

It localises to the cytoplasm. It catalyses the reaction ATP + H2O + a folded polypeptide = ADP + phosphate + an unfolded polypeptide.. Its function is as follows. Together with its co-chaperonin GroES, plays an essential role in assisting protein folding. The GroEL-GroES system forms a nano-cage that allows encapsulation of the non-native substrate proteins and provides a physical environment optimized to promote and accelerate protein folding. The chain is Chaperonin GroEL from Desulfatibacillum aliphaticivorans.